Reading from the N-terminus, the 610-residue chain is Zinc metalloproteinase-disintegrin-like 4a (610 aa).

Residues 1 to 20 form the signal peptide; the sequence is MIQVLLVTISLAVFPYQGSS. The propeptide occupies 21–189; the sequence is VILESGNVND…KKASQSNLTP (169 aa). The region spanning 199–395 is the Peptidase M12B domain; sequence KYVKLFLVAD…NMPQCILKKP (197 aa). N218 is a glycosylation site (N-linked (GlcNAc...) asparagine). D286 contributes to the Ca(2+) binding site. Disulfide bonds link C310–C390, C350–C374, and C352–C357. H335 serves as a coordination point for Zn(2+). E336 is a catalytic residue. Residues H339 and H345 each contribute to the Zn(2+) site. Ca(2+)-binding residues include C390, V405, N408, F410, E412, E415, and D418. In terms of domain architecture, Disintegrin spans 403-488; it reads PAVCGNYFVE…AECTDSFQRN (86 aa). Intrachain disulfides connect C406-C435, C417-C430, C419-C425, C429-C452, C443-C449, C448-C474, C461-C481, C468-C499, C492-C504, C511-C561, C526-C572, C539-C549, C556-C598, and C592-C603. A D/ECD-tripeptide motif is present at residues 467–469; it reads ECD.

Belongs to the venom metalloproteinase (M12B) family. P-III subfamily. Requires Zn(2+) as cofactor. As to expression, expressed by the venom gland.

The protein localises to the secreted. Snake venom metalloproteinase that impairs hemostasis in the envenomed animal. The chain is Zinc metalloproteinase-disintegrin-like 4a from Crotalus adamanteus (Eastern diamondback rattlesnake).